The following is a 357-amino-acid chain: Peptide chain release factor 1 (357 aa).

N5-methylglutamine is present on Gln236. The segment covering 284 to 293 (RRKKDQERAN) has biased composition (basic and acidic residues). The disordered stretch occupies residues 284-313 (RRKKDQERANNRRKQIGSGDRSERIRTYNF).

This sequence belongs to the prokaryotic/mitochondrial release factor family. Post-translationally, methylated by PrmC. Methylation increases the termination efficiency of RF1.

It localises to the cytoplasm. In terms of biological role, peptide chain release factor 1 directs the termination of translation in response to the peptide chain termination codons UAG and UAA. This Rickettsia bellii (strain RML369-C) protein is Peptide chain release factor 1.